The sequence spans 594 residues: MGKKSRVKTQKSGTGATASVSPKETLNLASELLQKCSSPAPGPGKEWEEYVQIRSLVEKIRKKQKGLSVTFDGKREDYFPDLMKWASENGASVEGFEMVSFKEEGFGLRATRDIKAEELFLWVPRKLLMTVESAKNSVLGPLYSQDRILQAMGNITLAFHLLCERADPNSFWQPYIQTLPSEYDTPLYFGEDEVRYLQSTQAIHDVFSQYKNTARQYAYFYKVIQTHPHANKLPLKDSFTYEDYRWAVSSVMTRQNQIPTEDGSRVTLALIPLWDMCNHTNGLITTGYNLEDDRCECVALQDFQAGEQIYIFYGTRSNAEFVIHSGFFFDNNSHDRVKIKLGVSKSDRLYAMKAEVLARAGIPTSSVFALHFTEPPISAQLLAFLRVFCMTEEELKEHLLGDNAIDRIFTLGNSEYPVSWDNEVKLWTFLEDRASLLLKTYKTNIEEDKSFLKNHDLSVRATMAIKLRLGEKEILEKAVKSAAANREYYRKQMEEGAPLPKYEESNPGLLEGGVVDSRLPLVLRNLEEEAGVQEALTLVEAVSRAKAVENGLINGENSIPNGTRLEKEDLNQEQSKRVTEDAKEPSDSTEEVKE.

A disordered region spans residues 1-23; the sequence is MGKKSRVKTQKSGTGATASVSPK. Residues 10–23 are compositionally biased toward polar residues; that stretch reads QKSGTGATASVSPK. S-adenosyl-L-methionine is bound by residues Arg75, 104–106, Arg254, 275–279, and 325–327; these read EGF, DMCNH, and SGF. The SET domain maps to 94-314; it reads EGFEMVSFKE…AGEQIYIFYG (221 aa). Residues 553 to 594 form a disordered region; sequence INGENSIPNGTRLEKEDLNQEQSKRVTEDAKEPSDSTEEVKE. Basic and acidic residues predominate over residues 564-594; it reads RLEKEDLNQEQSKRVTEDAKEPSDSTEEVKE.

It belongs to the class V-like SAM-binding methyltransferase superfamily. SETD3 actin-histidine methyltransferase family. Interacts with MYOD1. In terms of processing, phosphorylated by GSK3B, which is required for recognition by the SCF(FBXW7) complex and subsequent degradation. Ubiquitinated by the SCF(FBXW7) complex following phosphorylation by GSK3B, leading to its degradation by the proteasome.

It localises to the cytoplasm. The protein localises to the nucleus. It carries out the reaction L-histidyl-[protein] + S-adenosyl-L-methionine = N(tele)-methyl-L-histidyl-[protein] + S-adenosyl-L-homocysteine + H(+). In terms of biological role, protein-histidine N-methyltransferase that specifically mediates 3-methylhistidine (tele-methylhistidine) methylation of actin at 'His-73'. Histidine methylation of actin is required for smooth muscle contraction of the laboring uterus during delivery. Does not have protein-lysine N-methyltransferase activity and probably only catalyzes histidine methylation of actin. The chain is Actin-histidine N-methyltransferase from Rhinolophus ferrumequinum (Greater horseshoe bat).